The primary structure comprises 185 residues: Peptidyl-tRNA hydrolase (185 aa).

Phe12 lines the tRNA pocket. His17 serves as the catalytic Proton acceptor. Residues Tyr61, Asn63, and Asn109 each contribute to the tRNA site.

Belongs to the PTH family. Monomer.

The protein localises to the cytoplasm. The enzyme catalyses an N-acyl-L-alpha-aminoacyl-tRNA + H2O = an N-acyl-L-amino acid + a tRNA + H(+). Functionally, hydrolyzes ribosome-free peptidyl-tRNAs (with 1 or more amino acids incorporated), which drop off the ribosome during protein synthesis, or as a result of ribosome stalling. In terms of biological role, catalyzes the release of premature peptidyl moieties from peptidyl-tRNA molecules trapped in stalled 50S ribosomal subunits, and thus maintains levels of free tRNAs and 50S ribosomes. The polypeptide is Peptidyl-tRNA hydrolase (Borrelia garinii subsp. bavariensis (strain ATCC BAA-2496 / DSM 23469 / PBi) (Borreliella bavariensis)).